We begin with the raw amino-acid sequence, 208 residues long: MAAMMNNERSSSNKLQVDAENPAAVGDELDLAARANWLRAAVLGANDGLVSTASLMLGVGAVKAEARAMVISGFAGLLAGACSMAIGEFVSVCSQRDVELAQLERDGKRGGEEEKALPSPAQAAAASAMAFSVGAVVPLLAAGFIVNYRLRIAVVVAVASVALAAFGCVGAVLGRAAVARSSARVVLGGWAAMGITFGLMRLFKASGI.

The Cytoplasmic portion of the chain corresponds to 1 to 41; it reads MAAMMNNERSSSNKLQVDAENPAAVGDELDLAARANWLRAA. Residues 42–62 form a helical membrane-spanning segment; it reads VLGANDGLVSTASLMLGVGAV. Residues 63–69 lie on the Vacuolar side of the membrane; the sequence is KAEARAM. The chain crosses the membrane as a helical span at residues 70–90; that stretch reads VISGFAGLLAGACSMAIGEFV. The Cytoplasmic portion of the chain corresponds to 91–125; that stretch reads SVCSQRDVELAQLERDGKRGGEEEKALPSPAQAAA. The chain crosses the membrane as a helical span at residues 126-146; sequence ASAMAFSVGAVVPLLAAGFIV. Residues 147 to 151 are Vacuolar-facing; that stretch reads NYRLR. The helical transmembrane segment at 152–172 threads the bilayer; the sequence is IAVVVAVASVALAAFGCVGAV. Residues 173–184 are Cytoplasmic-facing; it reads LGRAAVARSSAR. The helical transmembrane segment at 185–205 threads the bilayer; it reads VVLGGWAAMGITFGLMRLFKA. The Vacuolar portion of the chain corresponds to 206–208; that stretch reads SGI.

It belongs to the CCC1 family.

The protein localises to the vacuole membrane. It carries out the reaction Fe(2+)(in) = Fe(2+)(out). Functionally, probable vacuolar iron transporter that may be involved in the regulation of iron distribution throughout the plant. This Oryza sativa subsp. japonica (Rice) protein is Vacuolar iron transporter homolog 5.